The chain runs to 136 residues: Large ribosomal subunit protein uL16 (136 aa).

This sequence belongs to the universal ribosomal protein uL16 family. As to quaternary structure, part of the 50S ribosomal subunit.

Functionally, binds 23S rRNA and is also seen to make contacts with the A and possibly P site tRNAs. The polypeptide is Large ribosomal subunit protein uL16 (Shewanella sediminis (strain HAW-EB3)).